The chain runs to 138 residues: Acidic phospholipase A2 inhibitor vaspin A chain (138 aa).

Positions 1-16 (MRTLWIVAVCLIGVEG) are cleaved as a signal peptide. 7 disulfides stabilise this stretch: cysteine 42–cysteine 131, cysteine 44–cysteine 60, cysteine 59–cysteine 111, cysteine 65–cysteine 138, cysteine 66–cysteine 104, cysteine 73–cysteine 97, and cysteine 91–cysteine 102.

Belongs to the phospholipase A2 family. Group II subfamily. D49 sub-subfamily. In terms of assembly, heterodimer of a toxic basic protein having phospholipase A2 activity (B chain (AC Q8JFG0)) and a non-toxic acidic protein functioning as its inhibitor (A chain). As to expression, expressed by the venom gland.

The protein resides in the secreted. Heterodimer: postsynaptic neurotoxin. Functionally, monomer: the acidic chain inhibits the basic phospholipase A2 of the complex. The chain is Acidic phospholipase A2 inhibitor vaspin A chain from Vipera aspis aspis (Aspic viper).